The sequence spans 523 residues: Mediator of RNA polymerase II transcription subunit 1.2 (523 aa).

It belongs to the Mediator complex subunit 1 family. As to quaternary structure, component of the Mediator complex.

Its subcellular location is the nucleus. Its function is as follows. Component of the Mediator complex, a coactivator involved in the regulated transcription of nearly all RNA polymerase II-dependent genes. Mediator functions as a bridge to convey information from gene-specific regulatory proteins to the basal RNA polymerase II transcription machinery. Mediator is recruited to promoters by direct interactions with regulatory proteins and serves as a scaffold for the assembly of a functional preinitiation complex with RNA polymerase II and the general transcription factors. The chain is Mediator of RNA polymerase II transcription subunit 1.2 (mdt-1.2) from Caenorhabditis briggsae.